The following is a 577-amino-acid chain: Optineurin (577 aa).

Disordered stretches follow at residues 1-32 (MSHQ…HPNL) and 101-143 (SHEN…KDQL). Positions 38–170 (EELLQQMKEL…VSELQLKLNS (133 aa)) form a coiled coil. The segment at 58–209 (MKLNNQAMKG…GPTRTVSTGT (152 aa)) is interaction with Rab8. Positions 176 to 181 (DSFVEI) match the LIR motif. Phosphoserine; by TBK1 is present on serine 177. Residues 186–197 (GEAEGSVKEIKH) show a composition bias toward basic and acidic residues. Disordered stretches follow at residues 186–209 (GEAE…STGT) and 261–297 (VSDF…TVGS). Residue serine 198 is modified to Phosphoserine. The stretch at 239–508 (CLREGNQKVE…LLKENDAFED (270 aa)) forms a coiled coil. 2 stretches are compositionally biased toward basic and acidic residues: residues 261-274 (VSDF…RSEI) and 281-292 (STEKENDEEKGP). Serine 342 carries the post-translational modification Phosphoserine. The interaction with HD stretch occupies residues 411–577 (TRKESEKVDR…LQIHVMDCII (167 aa)). The interaction with MYO6 stretch occupies residues 412 to 520 (RKESEKVDRA…RQSLMEMQSR (109 aa)). Residues 474-479 (DFHAER) carry the UBAN motif. Residue serine 526 is modified to Phosphoserine. Residues 547–577 (QRNIPIHSCPKCGEVLPDIDTLQIHVMDCII) form a CCHC NOA-type zinc finger. Residues cysteine 555, cysteine 558, histidine 571, and cysteine 575 each coordinate Zn(2+).

Self-associates. Interacts with HD. Interacts with GTF3A. Interacts with MYO6. Interacts (via UBAN) with ubiquitinated TFRC. Interacts with GTP-bound Rab8 (RAB8A and/or RAB8B). Interacts with TBC1D17. Interacts with TBK1. Interacts with TRAF3. Binds to linear ubiquitin chains. Interacts with LC3 family members MAP1LC3A, MAP1LC3B, GABARAP, GABARAPL1 and GABARAPL2; OPTN phosphorylation increases the association (at least with MAP1LC3B). Interacts with RAB12; the interaction may be indirect. Interacts with TBK1; this interaction leads to the Golgi localization of TBK1 and its subsequent activation. Interacts with palmitoyltransferase ZDHHC17/HIP14; the interaction does not lead to palmitoylation of OPTN. Interacts with CYLD. Interacts with TOM1; the interaction is indirect and is mediated by MYO6, which acts as a bridge between TOM1 and OPTN. Interacts with USP12; the interaction is independent of USP12 deubiquitinase activity and may be involved in regulation of autophagic flux. In terms of assembly, (Microbial infection) Interacts with E3 14.7 kDa protein of group C human adenovirus. Interacts with Bluetongue virus protein NS3. Phosphorylated by TBK1, leading to restrict bacterial proliferation in case of infection. Phosphorylation is induced by phorbol esters and decreases its half-time. Present in aqueous humor of the eye (at protein level). Expressed in the trabecular meshwork (at protein level). Expressed in nonpigmented ciliary epithelium (at protein level). Expressed at high levels in skeletal muscle, also detected in heart, brain, pancreas, kidney, placenta and liver. Expressed in dermal fibroblasts (at protein level).

It is found in the cytoplasm. It localises to the perinuclear region. Its subcellular location is the golgi apparatus. The protein resides in the trans-Golgi network. The protein localises to the cytoplasmic vesicle. It is found in the autophagosome. It localises to the recycling endosome. In terms of biological role, plays an important role in the maintenance of the Golgi complex, in membrane trafficking, in exocytosis, through its interaction with myosin VI and Rab8. Links myosin VI to the Golgi complex and plays an important role in Golgi ribbon formation. Plays a role in the activation of innate immune response during viral infection. Mechanistically, recruits TBK1 at the Golgi apparatus, promoting its trans-phosphorylation after RLR or TLR3 stimulation. In turn, activated TBK1 phosphorylates its downstream partner IRF3 to produce IFN-beta/IFNB1. Plays a neuroprotective role in the eye and optic nerve. May act by regulating membrane trafficking and cellular morphogenesis via a complex that contains Rab8 and huntingtin (HD). Mediates the interaction of Rab8 with the probable GTPase-activating protein TBC1D17 during Rab8-mediated endocytic trafficking, such as that of transferrin receptor (TFRC/TfR); regulates Rab8 recruitment to tubules emanating from the endocytic recycling compartment. Autophagy receptor that interacts directly with both the cargo to become degraded and an autophagy modifier of the MAP1 LC3 family; targets ubiquitin-coated bacteria (xenophagy), such as cytoplasmic Salmonella enterica, and appears to function in the same pathway as SQSTM1 and CALCOCO2/NDP52. Its function is as follows. (Microbial infection) May constitute a cellular target for various viruses, such as adenovirus E3 14.7 or Bluetongue virus, to inhibit innate immune response. During RNA virus infection, such as that of Sendai virus, negatively regulates the induction of IFNB1. This chain is Optineurin (OPTN), found in Homo sapiens (Human).